A 578-amino-acid chain; its full sequence is Glutathione hydrolase 2 (578 aa).

The signal sequence occupies residues 1–26 (MNSFMSLVRTATIALLLIAFLQNANA). The N-linked (GlcNAc...) asparagine glycan is linked to Asn94. Arg103 lines the L-glutamate pocket. 2 N-linked (GlcNAc...) asparagine glycosylation sites follow: Asn176 and Asn227. The Nucleophile role is filled by Thr374. L-glutamate is bound by residues Thr392, Asn394, Glu413, Asp416, 446-447 (SS), and 467-468 (GG). The N-linked (GlcNAc...) asparagine glycan is linked to Asn511.

It belongs to the gamma-glutamyltransferase family. In terms of tissue distribution, expressed in roots, immature trichomes and pollen. In developing siliques, specifically expressed in the embryo, endosperm, outer integument and a small portion of the funiculus.

The protein resides in the secreted. It localises to the extracellular space. The protein localises to the apoplast. The catalysed reaction is an N-terminal (5-L-glutamyl)-[peptide] + an alpha-amino acid = 5-L-glutamyl amino acid + an N-terminal L-alpha-aminoacyl-[peptide]. It carries out the reaction glutathione + H2O = L-cysteinylglycine + L-glutamate. It catalyses the reaction an S-substituted glutathione + H2O = an S-substituted L-cysteinylglycine + L-glutamate. It functions in the pathway sulfur metabolism; glutathione metabolism. Its function is as follows. May be required for glutathione transport into developing seeds. In Arabidopsis thaliana (Mouse-ear cress), this protein is Glutathione hydrolase 2 (GGT2).